A 469-amino-acid polypeptide reads, in one-letter code: Flap endonuclease 1-B (469 aa).

Positions 1–103 are N-domain; it reads MGIKGLTGLL…GVLSKRLERR (103 aa). Asp-32 is a Mg(2+) binding site. Residues Arg-45 and Arg-69 each contribute to the DNA site. Residues Asp-85, Glu-157, Glu-159, Asp-183, and Asp-185 each contribute to the Mg(2+) site. Residues 121–257 form an I-domain region; it reads DVDRFSRRTV…KSALKLIREY (137 aa). Glu-157 lines the DNA pocket. 2 residues coordinate DNA: Gly-235 and Asp-237. Asp-237 provides a ligand contact to Mg(2+). The segment at 274–354 is disordered; it reads QKAAQAAVES…GGMQIPEEWP (81 aa). Composition is skewed to acidic residues over residues 282–295 and 302–317; these read ESDE…EDEP and EMPD…EEEA. Residues 326–342 show a composition bias toward basic residues; sequence PKKKKASSKTKEKRKGK. Residues 412–420 form an interaction with PCNA region; that stretch reads QQGRLDGFF. Residues 424–469 form a disordered region; the sequence is PKEKAAAPAPVGKAKGKGKIDAKAKGTKRKVDEKAESSAGKKPRKK. The segment covering 441–459 has biased composition (basic and acidic residues); that stretch reads GKIDAKAKGTKRKVDEKAE.

The protein belongs to the XPG/RAD2 endonuclease family. FEN1 subfamily. Interacts with PCNA. Three molecules of FEN1 bind to one PCNA trimer with each molecule binding to one PCNA monomer. PCNA stimulates the nuclease activity without altering cleavage specificity. The cofactor is Mg(2+). Post-translationally, phosphorylated. Phosphorylation upon DNA damage induces relocalization to the nuclear plasma.

Its subcellular location is the nucleus. The protein localises to the nucleolus. The protein resides in the nucleoplasm. It localises to the mitochondrion. Structure-specific nuclease with 5'-flap endonuclease and 5'-3' exonuclease activities involved in DNA replication and repair. During DNA replication, cleaves the 5'-overhanging flap structure that is generated by displacement synthesis when DNA polymerase encounters the 5'-end of a downstream Okazaki fragment. It enters the flap from the 5'-end and then tracks to cleave the flap base, leaving a nick for ligation. Also involved in the long patch base excision repair (LP-BER) pathway, by cleaving within the apurinic/apyrimidinic (AP) site-terminated flap. Acts as a genome stabilization factor that prevents flaps from equilibrating into structures that lead to duplications and deletions. Also possesses 5'-3' exonuclease activity on nicked or gapped double-stranded DNA, and exhibits RNase H activity. Also involved in replication and repair of rDNA and in repairing mitochondrial DNA. This is Flap endonuclease 1-B from Laccaria bicolor (strain S238N-H82 / ATCC MYA-4686) (Bicoloured deceiver).